Reading from the N-terminus, the 168-residue chain is Phosphopantetheine adenylyltransferase (168 aa).

S9 lines the substrate pocket. Residues 9–10 and H17 contribute to the ATP site; that span reads SF. 3 residues coordinate substrate: K41, L73, and R87. ATP is bound by residues 88–90, E98, and 123–129; these read GLR and YAFLSSS.

This sequence belongs to the bacterial CoaD family. Homohexamer. It depends on Mg(2+) as a cofactor.

It localises to the cytoplasm. The catalysed reaction is (R)-4'-phosphopantetheine + ATP + H(+) = 3'-dephospho-CoA + diphosphate. Its pathway is cofactor biosynthesis; coenzyme A biosynthesis; CoA from (R)-pantothenate: step 4/5. In terms of biological role, reversibly transfers an adenylyl group from ATP to 4'-phosphopantetheine, yielding dephospho-CoA (dPCoA) and pyrophosphate. The sequence is that of Phosphopantetheine adenylyltransferase from Heliobacterium modesticaldum (strain ATCC 51547 / Ice1).